We begin with the raw amino-acid sequence, 181 residues long: Translationally-controlled tumor protein homolog (181 aa).

Residues 1 to 181 (MLIYKDIFTD…VKEAIIEEKC (181 aa)) form the TCTP domain.

This sequence belongs to the TCTP family.

It localises to the cytoplasm. Involved in calcium binding and microtubule stabilization. This chain is Translationally-controlled tumor protein homolog (tct-1), found in Caenorhabditis elegans.